A 544-amino-acid polypeptide reads, in one-letter code: CTP synthase (544 aa).

The interval 1–266 is amidoligase domain; it reads MSTKFIFVTG…DYFVCRRFHL (266 aa). Serine 14 lines the CTP pocket. Serine 14 contacts UTP. Residues 15–20 and aspartate 72 contribute to the ATP site; that span reads SLGKGI. Mg(2+)-binding residues include aspartate 72 and glutamate 140. CTP contacts are provided by residues 147 to 149, 187 to 192, and lysine 223; these read DIE and KTKPTQ. Residues 187–192 and lysine 223 each bind UTP; that span reads KTKPTQ. Positions 291–542 constitute a Glutamine amidotransferase type-1 domain; that stretch reads TIGMVGKYIE…VAAAHIHQKA (252 aa). L-glutamine is bound at residue glycine 352. Cysteine 379 serves as the catalytic Nucleophile; for glutamine hydrolysis. Residues 380-383, glutamate 403, and arginine 470 each bind L-glutamine; that span reads LGMQ. Catalysis depends on residues histidine 515 and glutamate 517.

The protein belongs to the CTP synthase family. Homotetramer.

It carries out the reaction UTP + L-glutamine + ATP + H2O = CTP + L-glutamate + ADP + phosphate + 2 H(+). The enzyme catalyses L-glutamine + H2O = L-glutamate + NH4(+). It catalyses the reaction UTP + NH4(+) + ATP = CTP + ADP + phosphate + 2 H(+). Its pathway is pyrimidine metabolism; CTP biosynthesis via de novo pathway; CTP from UDP: step 2/2. Its activity is regulated as follows. Allosterically activated by GTP, when glutamine is the substrate; GTP has no effect on the reaction when ammonia is the substrate. The allosteric effector GTP functions by stabilizing the protein conformation that binds the tetrahedral intermediate(s) formed during glutamine hydrolysis. Inhibited by the product CTP, via allosteric rather than competitive inhibition. Its function is as follows. Catalyzes the ATP-dependent amination of UTP to CTP with either L-glutamine or ammonia as the source of nitrogen. Regulates intracellular CTP levels through interactions with the four ribonucleotide triphosphates. The polypeptide is CTP synthase (Pseudoalteromonas translucida (strain TAC 125)).